The sequence spans 146 residues: Nucleoside diphosphate kinase (146 aa).

ATP contacts are provided by lysine 11, phenylalanine 59, arginine 87, threonine 93, arginine 104, and asparagine 114. Histidine 117 acts as the Pros-phosphohistidine intermediate in catalysis.

It belongs to the NDK family. In terms of assembly, homotetramer. The cofactor is Mg(2+).

The protein resides in the cytoplasm. The enzyme catalyses a 2'-deoxyribonucleoside 5'-diphosphate + ATP = a 2'-deoxyribonucleoside 5'-triphosphate + ADP. It catalyses the reaction a ribonucleoside 5'-diphosphate + ATP = a ribonucleoside 5'-triphosphate + ADP. Major role in the synthesis of nucleoside triphosphates other than ATP. The ATP gamma phosphate is transferred to the NDP beta phosphate via a ping-pong mechanism, using a phosphorylated active-site intermediate. The polypeptide is Nucleoside diphosphate kinase (Anaeromyxobacter sp. (strain Fw109-5)).